A 66-amino-acid chain; its full sequence is Large ribosomal subunit protein uL29 (66 aa).

It belongs to the universal ribosomal protein uL29 family.

The sequence is that of Large ribosomal subunit protein uL29 from Borrelia hermsii (strain HS1 / DAH).